Here is a 468-residue protein sequence, read N- to C-terminus: ATP synthase subunit beta (468 aa).

G155–T162 is a binding site for ATP.

This sequence belongs to the ATPase alpha/beta chains family. In terms of assembly, F-type ATPases have 2 components, CF(1) - the catalytic core - and CF(0) - the membrane proton channel. CF(1) has five subunits: alpha(3), beta(3), gamma(1), delta(1), epsilon(1). CF(0) has three main subunits: a(1), b(2) and c(9-12). The alpha and beta chains form an alternating ring which encloses part of the gamma chain. CF(1) is attached to CF(0) by a central stalk formed by the gamma and epsilon chains, while a peripheral stalk is formed by the delta and b chains.

The protein resides in the cell membrane. The catalysed reaction is ATP + H2O + 4 H(+)(in) = ADP + phosphate + 5 H(+)(out). Functionally, produces ATP from ADP in the presence of a proton gradient across the membrane. The catalytic sites are hosted primarily by the beta subunits. The chain is ATP synthase subunit beta from Streptococcus pneumoniae (strain ATCC BAA-255 / R6).